The primary structure comprises 106 residues: Large ribosomal subunit protein eL42 (106 aa).

Positions 34–53 (YAQGRRRYDRKRSGYGGQTK) are disordered. Lys53 bears the N6-methyllysine mark.

The protein belongs to the eukaryotic ribosomal protein eL42 family.

The protein localises to the cytoplasm. This Pongo abelii (Sumatran orangutan) protein is Large ribosomal subunit protein eL42 (RPL36AL).